A 214-amino-acid chain; its full sequence is Glycerol-3-phosphate acyltransferase (214 aa).

The next 5 helical transmembrane spans lie at 4 to 24 (LIVAVVAYLIGSVSFAVIVSA), 52 to 72 (AAILTLIGDAFKGWLPVWFVV), 82 to 102 (ETSVAIASVAVFLGHLYPVFF), 118 to 138 (LAINPILGVATLLTWLIVAFF), and 159 to 179 (FLFGPHVIALAIVVMSSLLVW).

Belongs to the PlsY family. Probably interacts with PlsX.

The protein resides in the cell inner membrane. The catalysed reaction is an acyl phosphate + sn-glycerol 3-phosphate = a 1-acyl-sn-glycero-3-phosphate + phosphate. It participates in lipid metabolism; phospholipid metabolism. Catalyzes the transfer of an acyl group from acyl-phosphate (acyl-PO(4)) to glycerol-3-phosphate (G3P) to form lysophosphatidic acid (LPA). This enzyme utilizes acyl-phosphate as fatty acyl donor, but not acyl-CoA or acyl-ACP. In Paraburkholderia phytofirmans (strain DSM 17436 / LMG 22146 / PsJN) (Burkholderia phytofirmans), this protein is Glycerol-3-phosphate acyltransferase.